We begin with the raw amino-acid sequence, 233 residues long: Triosephosphate isomerase (233 aa).

8-10 (NWK) serves as a coordination point for substrate. Histidine 91 functions as the Electrophile in the catalytic mechanism. Glutamate 155 acts as the Proton acceptor in catalysis. Residues glycine 161 and serine 192 each coordinate substrate.

It belongs to the triosephosphate isomerase family. Homodimer.

It is found in the cytoplasm. The enzyme catalyses D-glyceraldehyde 3-phosphate = dihydroxyacetone phosphate. It functions in the pathway carbohydrate biosynthesis; gluconeogenesis. The protein operates within carbohydrate degradation; glycolysis; D-glyceraldehyde 3-phosphate from glycerone phosphate: step 1/1. Involved in the gluconeogenesis. Catalyzes stereospecifically the conversion of dihydroxyacetone phosphate (DHAP) to D-glyceraldehyde-3-phosphate (G3P). This Wolbachia sp. subsp. Brugia malayi (strain TRS) protein is Triosephosphate isomerase.